A 484-amino-acid polypeptide reads, in one-letter code: Glutamate--tRNA ligase (484 aa).

The 'HIGH' region signature appears at 11–21 (PSPTGYLHIGN). Positions 252 to 256 (KLSKR) match the 'KMSKS' region motif. Position 255 (K255) interacts with ATP.

This sequence belongs to the class-I aminoacyl-tRNA synthetase family. Glutamate--tRNA ligase type 1 subfamily. In terms of assembly, monomer.

It is found in the cytoplasm. The catalysed reaction is tRNA(Glu) + L-glutamate + ATP = L-glutamyl-tRNA(Glu) + AMP + diphosphate. Functionally, catalyzes the attachment of glutamate to tRNA(Glu) in a two-step reaction: glutamate is first activated by ATP to form Glu-AMP and then transferred to the acceptor end of tRNA(Glu). The polypeptide is Glutamate--tRNA ligase (Staphylococcus aureus (strain bovine RF122 / ET3-1)).